A 298-amino-acid polypeptide reads, in one-letter code: Tyrosine recombinase XerC (298 aa).

The region spanning 1 to 85 is the Core-binding (CB) domain; that stretch reads MQQQLDAYCA…AVRGLYHYLN (85 aa). Positions 106–285 constitute a Tyr recombinase domain; the sequence is RLPKTLDTDR…DFQHLAAVYD (180 aa). Catalysis depends on residues arginine 146, lysine 170, histidine 237, arginine 240, and histidine 263. Tyrosine 272 acts as the O-(3'-phospho-DNA)-tyrosine intermediate in catalysis.

It belongs to the 'phage' integrase family. XerC subfamily. In terms of assembly, forms a cyclic heterotetrameric complex composed of two molecules of XerC and two molecules of XerD.

It localises to the cytoplasm. Site-specific tyrosine recombinase, which acts by catalyzing the cutting and rejoining of the recombining DNA molecules. The XerC-XerD complex is essential to convert dimers of the bacterial chromosome into monomers to permit their segregation at cell division. It also contributes to the segregational stability of plasmids. The sequence is that of Tyrosine recombinase XerC from Pseudomonas fluorescens (strain ATCC BAA-477 / NRRL B-23932 / Pf-5).